Consider the following 440-residue polypeptide: Syntrophin-1 (440 aa).

2 PH domains span residues 2 to 208 (AAVR…ACTT) and 227 to 340 (QVRH…IGGY). The 84-residue stretch at 45–128 (TVRVVKYDGN…VVDLQVQYRR (84 aa)) folds into the PDZ domain. One can recognise an SU domain in the interval 384 to 440 (SFETIRATGDDGGRFLWVDFGPPHGEQELDLLNSAKPVVFILHSFLATKVYRLGLYA).

The protein belongs to the syntrophin family. In terms of assembly, component of the dystrophin glycoprotein complex (DGC). Interacts with dyb-1, dys-1 and snf-6 to form the DGC. In terms of tissue distribution, expressed in neurons and muscles; particularly strong expression in the body wall, head and vulval muscles, and in ventral nerve cord (at protein level).

The protein resides in the membrane. Its subcellular location is the cytoplasm. It is found in the cytoskeleton. Its function is as follows. Adapter protein that binds to and probably organizes the subcellular localization of a variety of membrane proteins. May link various receptors to the actin cytoskeleton and the dystrophin glycoprotein complex (DGC). May also act by slowing calcium channel activity via a direct or indirect mechanism potentially involving other second messengers. Plays an early role in the formation of the neuromuscular junction and is necessary for muscle maintenance. This chain is Syntrophin-1, found in Caenorhabditis elegans.